The sequence spans 810 residues: Coiled-coil domain-containing protein 15 (810 aa).

Coiled coils occupy residues Val65 to Arg89, Asp160 to Thr189, and Met638 to Arg669.

In terms of assembly, interacts with POC5, POC1B, CETN2 and FAM161A.

It localises to the cytoplasm. It is found in the cytoskeleton. The protein resides in the microtubule organizing center. The protein localises to the centrosome. Its subcellular location is the centriole. It localises to the centriolar satellite. Functionally, plays an important role in primary cilium assembly, maintenance, and length regulation. Interacts with centriole inner scaffold proteins to promote proper centriole size and integrity and assembly of functional cilia. Required for the recruitment of both the inner scaffold protein POC1B and the distal SFI1/CETN2 complex to centrioles. The protein is Coiled-coil domain-containing protein 15 (Ccdc15) of Mus musculus (Mouse).